Here is a 244-residue protein sequence, read N- to C-terminus: Flavin-dependent thymidylate synthase (244 aa).

The region spanning 2 to 207 (VRVTLVNYTR…ELRPIIKWAK (206 aa)) is the ThyX domain. FAD contacts are provided by residues serine 56, 80 to 82 (RHR), and glutamine 88. Residues 77–80 (QLVR), 88–92 (QQSQR), and arginine 146 each bind dUMP. The ThyX motif signature appears at 80–90 (RHRIASYTQQS). FAD contacts are provided by residues 162-164 (NLR) and histidine 168. A dUMP-binding site is contributed by arginine 173. Catalysis depends on arginine 173, which acts as the Involved in ionization of N3 of dUMP, leading to its activation.

Belongs to the thymidylate synthase ThyX family. Homotetramer. It depends on FAD as a cofactor.

It carries out the reaction dUMP + (6R)-5,10-methylene-5,6,7,8-tetrahydrofolate + NADPH + H(+) = dTMP + (6S)-5,6,7,8-tetrahydrofolate + NADP(+). The protein operates within pyrimidine metabolism; dTTP biosynthesis. Catalyzes the reductive methylation of 2'-deoxyuridine-5'-monophosphate (dUMP) to 2'-deoxythymidine-5'-monophosphate (dTMP) while utilizing 5,10-methylenetetrahydrofolate (mTHF) as the methyl donor, and NADPH and FADH(2) as the reductant. This is Flavin-dependent thymidylate synthase from Pyrococcus abyssi (strain GE5 / Orsay).